The sequence spans 100 residues: NADH-quinone oxidoreductase subunit K (100 aa).

The next 3 membrane-spanning stretches (helical) occupy residues 4-24 (TSYYVLLSAILFTIGVLGVLL), 29-49 (IVVFMAVELMLNAANLALVAF), and 60-80 (VIVFFVITVAAAEVAVGLALL).

This sequence belongs to the complex I subunit 4L family. As to quaternary structure, NDH-1 is composed of 14 different subunits. Subunits NuoA, H, J, K, L, M, N constitute the membrane sector of the complex.

It localises to the cell membrane. It catalyses the reaction a quinone + NADH + 5 H(+)(in) = a quinol + NAD(+) + 4 H(+)(out). In terms of biological role, NDH-1 shuttles electrons from NADH, via FMN and iron-sulfur (Fe-S) centers, to quinones in the respiratory chain. The immediate electron acceptor for the enzyme in this species is believed to be ubiquinone. Couples the redox reaction to proton translocation (for every two electrons transferred, four hydrogen ions are translocated across the cytoplasmic membrane), and thus conserves the redox energy in a proton gradient. The polypeptide is NADH-quinone oxidoreductase subunit K (Chloroflexus aurantiacus (strain ATCC 29366 / DSM 635 / J-10-fl)).